A 701-amino-acid polypeptide reads, in one-letter code: Peptide transporter 3 (701 aa).

Transmembrane regions (helical) follow at residues 29–49, 55–75, 91–111, 119–139, 154–174, 188–208, 269–289, 318–338, and 351–371; these read FSFY…HEFS, FIYH…SIMA, IYVV…SYPI, GLFV…AFAA, FSFF…ITPI, FPLA…LFLM, GLLN…LFDQ, INPV…YPAL, and AVGG…QLKV. 2 N-linked (GlcNAc...) asparagine glycosylation sites follow: Asn391 and Asn432. A run of 3 helical transmembrane segments spans residues 575-595, 611-631, and 641-661; these read ILWS…LSVT, VLTA…MMIS, and LEFF…ILLA.

It belongs to the major facilitator superfamily. Proton-dependent oligopeptide transporter (POT/PTR) (TC 2.A.17) family. As to expression, expressed in the AVA interneuron.

The protein resides in the membrane. Its function is as follows. Neuron-specific, H(+)-coupled oligopeptide transporter with broad specificity towards di- and tripeptides in a Na(+) and Cl(-)-independent manner. Shows H(+) channel activity in the absence of peptide substrates. This chain is Peptide transporter 3 (pept-3), found in Caenorhabditis elegans.